The chain runs to 127 residues: Nuclear transport factor 2 (127 aa).

Residues 11-124 (VGKQFVEHYY…FLLINDFFRL (114 aa)) enclose the NTF2 domain.

The protein localises to the cytoplasm. The protein resides in the cytosol. It is found in the nucleus outer membrane. It localises to the nucleus. Its subcellular location is the nuclear pore complex. The protein localises to the nucleus inner membrane. The protein resides in the nucleoplasm. In terms of biological role, mediates the import of GDP-bound RAN from the cytoplasm into the nucleus which is essential for the function of RAN in cargo receptor-mediated nucleocytoplasmic transport. Thereby, plays indirectly a more general role in cargo receptor-mediated nucleocytoplasmic transport. Interacts with GDP-bound RAN in the cytosol, recruits it to the nuclear pore complex via its interaction with nucleoporins and promotes its nuclear import. This Dictyostelium discoideum (Social amoeba) protein is Nuclear transport factor 2.